Consider the following 245-residue polypeptide: Probable 2-phosphosulfolactate phosphatase (245 aa).

The protein belongs to the ComB family. The cofactor is Mg(2+).

The catalysed reaction is (2R)-O-phospho-3-sulfolactate + H2O = (2R)-3-sulfolactate + phosphate. The protein is Probable 2-phosphosulfolactate phosphatase of Trichormus variabilis (strain ATCC 29413 / PCC 7937) (Anabaena variabilis).